Reading from the N-terminus, the 154-residue chain is Myoglobin (154 aa).

The Globin domain occupies 2–148 (GLSDGEWQLV…FRNDIAAKYK (147 aa)). Position 4 is a phosphoserine (Ser4). His65 provides a ligand contact to nitrite. His65 contributes to the O2 binding site. Thr68 carries the phosphothreonine modification. A heme b-binding site is contributed by His94.

The protein belongs to the globin family. In terms of assembly, monomeric.

Its subcellular location is the cytoplasm. The protein resides in the sarcoplasm. The enzyme catalyses Fe(III)-heme b-[protein] + nitric oxide + H2O = Fe(II)-heme b-[protein] + nitrite + 2 H(+). It carries out the reaction H2O2 + AH2 = A + 2 H2O. Functionally, monomeric heme protein which primary function is to store oxygen and facilitate its diffusion within muscle tissues. Reversibly binds oxygen through a pentacoordinated heme iron and enables its timely and efficient release as needed during periods of heightened demand. Depending on the oxidative conditions of tissues and cells, and in addition to its ability to bind oxygen, it also has a nitrite reductase activity whereby it regulates the production of bioactive nitric oxide. Under stress conditions, like hypoxia and anoxia, it also protects cells against reactive oxygen species thanks to its pseudoperoxidase activity. The sequence is that of Myoglobin (MB) from Sciurus vulgaris (Eurasian red squirrel).